Reading from the N-terminus, the 22-residue chain is 2.39 kDa venom peptide (22 aa).

Contains 2 disulfide bonds. As to expression, expressed by the venom gland.

The protein resides in the secreted. Functionally, not lethal to mice by intraperitoneal or intracerebroventricular injections in doses up to 100 micrograms. The sequence is that of 2.39 kDa venom peptide from Heterometrus spinifer (Asia giant forest scorpion).